The primary structure comprises 299 residues: Putative S-adenosyl-L-methionine-dependent methyltransferase MAB_0027c (299 aa).

Residues aspartate 126 and 155-156 (DL) each bind S-adenosyl-L-methionine.

This sequence belongs to the UPF0677 family.

In terms of biological role, exhibits S-adenosyl-L-methionine-dependent methyltransferase activity. The chain is Putative S-adenosyl-L-methionine-dependent methyltransferase MAB_0027c from Mycobacteroides abscessus (strain ATCC 19977 / DSM 44196 / CCUG 20993 / CIP 104536 / JCM 13569 / NCTC 13031 / TMC 1543 / L948) (Mycobacterium abscessus).